The sequence spans 640 residues: MSFRSLLALSGLVCTGLANVISKRATLDSWLSNEATVARTAILNNIGADGAWVSGADSGIVVASPSTDNPDYFYTWTRDSGLVLKTLVDLFRNGDTSLLSTIENYISAQAIVQGISNPSGDLSSGAGLGEPKFNVDETAYTGSWGRPQRDGPALRATAMIGFGQWLLDNGYTSTATDIVWPLVRNDLSYVAQYWNQTGYDLWEEVNGSSFFTIAVQHRALVEGSAFATAVGSSCSWCDSQAPEILCYLQSFWTGSFILANFDSSRSGKDANTLLGSIHTFDPEAACDDSTFQPCSPRALANHKEVVDSFRSIYTLNDGLSDSEAVAVGRYPEDTYYNGNPWFLCTLAAAEQLYDALYQWDKQGSLEVTDVSLDFFKALYSDAATGTYSSSSSTYSSIVDAVKTFADGFVSIVETHAASNGSMSEQYDKSDGEQLSARDLTWSYAALLTANNRRNSVVPASWGETSASSVPGTCAATSAIGTYSSVTVTSWPSIVATGGTTTTATPTGSGSVTSTSKTTATASKTSTSTSSTSCTTPTAVAVTFDLTATTTYGENIYLVGSISQLGDWETSDGIALSADKYTSSDPLWYVTVTLPAGESFEYKFIRIESDDSVEWESDPNREYTVPQACGTSTATVTDTWR.

An N-terminal signal peptide occupies residues 1-18 (MSFRSLLALSGLVCTGLA). The propeptide occupies 19–24 (NVISKR). Tryptophan 144 provides a ligand contact to substrate. Asparagine 195 carries N-linked (GlcNAc...) asparagine glycosylation. Residue aspartate 200 is the Proton acceptor of the active site. Catalysis depends on glutamate 203, which acts as the Proton donor. 3 disulfides stabilise this stretch: cysteine 234–cysteine 237, cysteine 246–cysteine 473, and cysteine 286–cysteine 294. N-linked (GlcNAc...) asparagine glycosylation is present at asparagine 419. 3 O-linked (Man) serine glycosylation sites follow: serine 465, serine 467, and serine 468. Threonine 476 carries an O-linked (Man) threonine glycan. Serine 477, serine 483, and serine 484 each carry an O-linked (Man) serine glycan. 2 O-linked (Man) threonine glycosylation sites follow: threonine 486 and threonine 488. Serine 492 carries O-linked (Man) serine glycosylation. O-linked (Man) threonine glycosylation is found at threonine 496, threonine 499, threonine 500, threonine 501, threonine 502, threonine 504, and threonine 506. The segment at 498–533 (GTTTTATPTGSGSVTSTSKTTATASKTSTSTSSTSC) is disordered. Serine 508 and serine 510 each carry an O-linked (Man) serine glycan. O-linked (Man) threonine glycosylation occurs at threonine 512. Serine 513 carries an O-linked (Man) serine glycan. O-linked (Man) threonine glycosylation occurs at threonine 514. Serine 515 carries O-linked (Man) serine glycosylation. O-linked (Man) threonine glycans are attached at residues threonine 517, threonine 518, and threonine 520. Serine 522 carries O-linked (Man) serine glycosylation. A glycan (O-linked (Man) threonine) is linked at threonine 524. Residue serine 525 is glycosylated (O-linked (Man) serine). Threonine 526 is a glycosylation site (O-linked (Man) threonine). O-linked (Man) serine glycosylation occurs at serine 527. The O-linked (Man) threonine glycan is linked to threonine 528. Residues serine 529 and serine 530 are each glycosylated (O-linked (Man) serine). An O-linked (Man) threonine glycan is attached at threonine 531. Serine 532 carries O-linked (Man) serine glycosylation. The region spanning 533–640 (CTTPTAVAVT…STATVTDTWR (108 aa)) is the CBM20 domain. O-linked (Man) threonine glycans are attached at residues threonine 534 and threonine 535. The segment at 616–640 (SDPNREYTVPQACGTSTATVTDTWR) is disordered. The span at 628-640 (CGTSTATVTDTWR) shows a compositional bias: polar residues.

This sequence belongs to the glycosyl hydrolase 15 family.

It carries out the reaction Hydrolysis of terminal (1-&gt;4)-linked alpha-D-glucose residues successively from non-reducing ends of the chains with release of beta-D-glucose.. This Aspergillus awamori (Black koji mold) protein is Glucoamylase (GLAA).